The following is a 56-amino-acid chain: Large ribosomal subunit protein bL32 (56 aa).

Residues 1–35 (MAVQQNKSTRSKRGMRRSHHALRSVTISVDRTSGE) are disordered. A compositionally biased stretch (basic residues) spans 9–22 (TRSKRGMRRSHHAL).

The protein belongs to the bacterial ribosomal protein bL32 family.

In Blochmanniella pennsylvanica (strain BPEN), this protein is Large ribosomal subunit protein bL32.